Reading from the N-terminus, the 371-residue chain is MDTRSGSQCSVTPEAIRNNEELVLPPRISRVNGWSLPLHYFRVVTWAVFVGLSLATFRIFIPLLPHSWKYIAYVVTGGIFSFHLVVHLIASCIDPADSNVRLMKNYSQPMPLFDRSKHAHVIQNQFCHLCKVTVNKKTKHCISCNKCVSGFDHHCKWINNCVGSRNYWFFFSTVASATAGMLCLIAILLYVLVQYLVNPRVLRTDPRYEDVKNMNTWLLFLPLFPVQVQTLIVVIIRMLVLLLDLLGLVQLGQLLIFHIYLKAKKMTTFEYLINTRKEESSKHQAVRKDPYVQMDKGFLQQGAGALGSSAQGVKAKSSLLIYKCPCHFCTSVNQDGDSKAQEADDAPSTSTLGLQQETTEPMKTDSAESED.

The next 2 helical transmembrane spans lie at 43-63 and 70-90; these read VVTWAVFVGLSLATFRIFIPL and YIAYVVTGGIFSFHLVVHLIA. A DHHC domain is found at 125–175; the sequence is QFCHLCKVTVNKKTKHCISCNKCVSGFDHHCKWINNCVGSRNYWFFFSTVA. The active-site S-palmitoyl cysteine intermediate is the Cys155. The next 3 helical transmembrane spans lie at 177–197, 216–236, and 239–259; these read ATAGMLCLIAILLYVLVQYLV, TWLLFLPLFPVQVQTLIVVII, and LVLLLDLLGLVQLGQLLIFHI. The tract at residues 335 to 371 is disordered; it reads DGDSKAQEADDAPSTSTLGLQQETTEPMKTDSAESED. Polar residues predominate over residues 347–359; that stretch reads PSTSTLGLQQETT. A compositionally biased stretch (basic and acidic residues) spans 360 to 371; the sequence is EPMKTDSAESED.

Belongs to the DHHC palmitoyltransferase family.

It is found in the membrane. It carries out the reaction L-cysteinyl-[protein] + hexadecanoyl-CoA = S-hexadecanoyl-L-cysteinyl-[protein] + CoA. Its function is as follows. Probable palmitoyltransferase that could catalyze the addition of palmitate onto various protein substrates and be involved in a variety of cellular processes. May play a role in cell proliferation. The polypeptide is Probable palmitoyltransferase ZDHHC11B (Homo sapiens (Human)).